The primary structure comprises 484 residues: Glutamate--tRNA ligase (484 aa).

A 'HIGH' region motif is present at residues 11 to 21 (PSPTGYLHIGN). The short motif at 252–256 (KLSKR) is the 'KMSKS' region element. Lys255 lines the ATP pocket.

It belongs to the class-I aminoacyl-tRNA synthetase family. Glutamate--tRNA ligase type 1 subfamily. Monomer.

The protein localises to the cytoplasm. It carries out the reaction tRNA(Glu) + L-glutamate + ATP = L-glutamyl-tRNA(Glu) + AMP + diphosphate. Its function is as follows. Catalyzes the attachment of glutamate to tRNA(Glu) in a two-step reaction: glutamate is first activated by ATP to form Glu-AMP and then transferred to the acceptor end of tRNA(Glu). This Staphylococcus aureus (strain COL) protein is Glutamate--tRNA ligase.